Reading from the N-terminus, the 821-residue chain is MKVSQNWLKSLVEINTTAHDLSEKLSIGGFEVESLVDCSENVKGIVLGKVLSVVKHENSDKLSICIVDIGRSNPLQIVCGAKNVKQNIYVYVATVGTHLSAINLTIKKSEIRGVSSEGMICSLEELGIEDTSEGIAIIDEDIALNHNLGTSGAELLDLNDYIYDLAITANRPDGMSVVGIAREISALLETKLNFPGLKTRYKTNVYKNFNLCPEAISKNCLYSISNIESVNGKQLSPGWLKDRLDKSGIKSINLLVDITNYILLEQGQPLHAFDKDKLSNLIGRKVSYEDFSVRKANNNESLLCLNGENYKLNENITIIACDDKPVAIAGVIGGLETAVNEDTSSIYLEGAVFNPVIIRKSSKVIGIRTESSSRYEKGISYKNTLDSVTRAINILEEYFNITSPIINTSTELDLKKILIPLRRERIKKILGPIVIRNENYENNSKLEKRYLTDTEITEKLKLIGCTLNIKEYGWDVEIIPNRSQDLLREIDLIEEIARLIGYDMFDLNLPNPIKPGKLSSFQIALRKLKTGLIVNGFNEVLSYSLVPESKNNLIKISNPLLLETSCLRDNIWKEHINICNQNIKSGHEYCWIFEVGNIFHKKPDFSQEEILNGAIYGNNKFEQWLGSNKDNNMTYYEARGKLKEALSILNLNIEDKPTDTIDFLHPGRSSRLFTEGNEVGYFGEIHPNLISNKIALKKMYLFSLKINSILQASTRKNKWITVYKQFPTVPKMERDINFIFNKKYLVSEIISQIKKSGTKLLENVNLIDVYDDDSFGKEFISYTFRLSYRDSEKTLLDSDIGYLHDSVVEIIEKKFSTKLRD.

Residues 39 to 149 (SENVKGIVLG…EDIALNHNLG (111 aa)) enclose the tRNA-binding domain. The region spanning 414–507 (LKKILIPLRR…RLIGYDMFDL (94 aa)) is the B5 domain. Residues Asp-485, Asp-491, Glu-494, and Glu-495 each contribute to the Mg(2+) site. The region spanning 727–820 (PTVPKMERDI…IEKKFSTKLR (94 aa)) is the FDX-ACB domain.

This sequence belongs to the phenylalanyl-tRNA synthetase beta subunit family. Type 1 subfamily. In terms of assembly, tetramer of two alpha and two beta subunits. Requires Mg(2+) as cofactor.

Its subcellular location is the cytoplasm. It catalyses the reaction tRNA(Phe) + L-phenylalanine + ATP = L-phenylalanyl-tRNA(Phe) + AMP + diphosphate + H(+). The polypeptide is Phenylalanine--tRNA ligase beta subunit (Prochlorococcus marinus subsp. pastoris (strain CCMP1986 / NIES-2087 / MED4)).